We begin with the raw amino-acid sequence, 142 residues long: Large ribosomal subunit protein uL13 (142 aa).

It belongs to the universal ribosomal protein uL13 family. As to quaternary structure, part of the 50S ribosomal subunit.

Functionally, this protein is one of the early assembly proteins of the 50S ribosomal subunit, although it is not seen to bind rRNA by itself. It is important during the early stages of 50S assembly. This is Large ribosomal subunit protein uL13 from Coxiella burnetii (strain CbuK_Q154) (Coxiella burnetii (strain Q154)).